A 98-amino-acid chain; its full sequence is NADH-ubiquinone oxidoreductase chain 4L (98 aa).

A run of 3 helical transmembrane segments spans residues 1–21 (MSLIHMNIIMAFTLSLVGLLM), 29–49 (ALLCMEGMMLSLFILATLTAL), and 59–79 (MPIILLVFAACEAAIGLALLV).

It belongs to the complex I subunit 4L family. Core subunit of respiratory chain NADH dehydrogenase (Complex I) which is composed of 45 different subunits.

The protein localises to the mitochondrion inner membrane. The catalysed reaction is a ubiquinone + NADH + 5 H(+)(in) = a ubiquinol + NAD(+) + 4 H(+)(out). Its function is as follows. Core subunit of the mitochondrial membrane respiratory chain NADH dehydrogenase (Complex I) which catalyzes electron transfer from NADH through the respiratory chain, using ubiquinone as an electron acceptor. Part of the enzyme membrane arm which is embedded in the lipid bilayer and involved in proton translocation. The polypeptide is NADH-ubiquinone oxidoreductase chain 4L (MT-ND4L) (Hyperoodon ampullatus (Northern bottlenose whale)).